The following is a 311-amino-acid chain: Putative ribose-phosphate pyrophosphokinase 2 (311 aa).

Residues 38–40 (DGE) and 97–98 (RQ) contribute to the ATP site. 2 residues coordinate Mg(2+): H131 and D171. D219 lines the D-ribose 5-phosphate pocket.

The protein belongs to the ribose-phosphate pyrophosphokinase family. Class I subfamily. As to quaternary structure, homohexamer. Mg(2+) is required as a cofactor.

The protein localises to the cytoplasm. It carries out the reaction D-ribose 5-phosphate + ATP = 5-phospho-alpha-D-ribose 1-diphosphate + AMP + H(+). Its pathway is metabolic intermediate biosynthesis; 5-phospho-alpha-D-ribose 1-diphosphate biosynthesis; 5-phospho-alpha-D-ribose 1-diphosphate from D-ribose 5-phosphate (route I): step 1/1. Involved in the biosynthesis of the central metabolite phospho-alpha-D-ribosyl-1-pyrophosphate (PRPP) via the transfer of pyrophosphoryl group from ATP to 1-hydroxyl of ribose-5-phosphate (Rib-5-P). In Listeria innocua serovar 6a (strain ATCC BAA-680 / CLIP 11262), this protein is Putative ribose-phosphate pyrophosphokinase 2.